Reading from the N-terminus, the 288-residue chain is Phenazine biosynthesis-like domain-containing protein (288 aa).

Glu-46 is an active-site residue.

This sequence belongs to the PhzF family. Interacts with UNRIP/MAWD.

This is Phenazine biosynthesis-like domain-containing protein (PBLD) from Bos taurus (Bovine).